Consider the following 1156-residue polypeptide: Nitric oxide synthase, inducible (1156 aa).

Residues 23–27 (DINNN) carry the DINNN-motif; mediates interaction with SPSB1, SPSB2 and SPSB4 motif. The interval 27 to 84 (NVGKFYQPPSSPVTQDDPKRHSPGKHGNESPQPLTGTVKTSPESLSKLDAPPSACPRH) is disordered. Residues 55 to 70 (ESPQPLTGTVKTSPES) are compositionally biased toward polar residues. Zn(2+) is bound by residues C110 and C115. A (6R)-L-erythro-5,6,7,8-tetrahydrobiopterin-binding site is contributed by S118. C200 is a binding site for heme b. Residues Q263, W372, Y373, and E377 each coordinate L-arginine. R381, I462, W463, and F476 together coordinate (6R)-L-erythro-5,6,7,8-tetrahydrobiopterin. Residue Y491 participates in heme b binding. The calmodulin-binding stretch occupies residues 515–535 (FKVLVKAVFFASVLMHKAMAS). A Flavodoxin-like domain is found at 539-677 (ATILFATETG…AFRSWAVQTF (139 aa)). T545, E546, T547, R549, and S550 together coordinate FMN. Residue Y575 is modified to Phosphotyrosine. Residues S591, T592, S628, C635, E661, and Q665 each coordinate FMN. The 241-residue stretch at 730-970 (KHVFTMRLKS…VRSASGFQLP (241 aa)) folds into the FAD-binding FR-type domain. R750 contributes to the NADP(+) binding site. H772, R906, Y908, S909, T924, and A926 together coordinate FAD. Residue T929 coordinates NADP(+). 4 residues coordinate FAD: Y930, V943, C944, and S945. NADP(+)-binding residues include T984, R1017, S1046, R1047, K1053, Y1055, Q1057, and D1090.

This sequence belongs to the NOS family. As to quaternary structure, homodimer. Interacts with NHERF1. Interacts with GAPDH; induced by oxidatively-modified low-densitity lipoprotein (LDL(ox)). Interacts with S100A8 and S100A9 to form the iNOS-S100A8/9 transnitrosylase complex. Interacts with SPSB1, SPSB2 and SPSB4. Interacts with ELOC and CUL5 in the presence of SPSB1 or SPSB2 or SPSB4. Forms a complex with ASL, ASS1 and HSP90AA1; the complex regulates cell-autonomous L-arginine synthesis and citrulline recycling while channeling extracellular L-arginine to nitric oxide synthesis pathway. Requires heme b as cofactor. It depends on FAD as a cofactor. FMN serves as cofactor. (6R)-L-erythro-5,6,7,8-tetrahydrobiopterin is required as a cofactor. Post-translationally, polyubiquitinated; mediated by SPSB1, SPSB2 and SPSB4, leading to proteasomal degradation.

Its subcellular location is the cytoplasm. It is found in the cytosol. The enzyme catalyses 2 L-arginine + 3 NADPH + 4 O2 + H(+) = 2 L-citrulline + 2 nitric oxide + 3 NADP(+) + 4 H2O. Regulated by calcium/calmodulin. Produces nitric oxide (NO) which is a messenger molecule with diverse functions throughout the body. In macrophages, NO mediates tumoricidal and bactericidal actions. Also has nitrosylase activity and mediates cysteine S-nitrosylation of cytoplasmic target proteins such PTGS2/COX2. As component of the iNOS-S100A8/9 transnitrosylase complex involved in the selective inflammatory stimulus-dependent S-nitrosylation of GAPDH implicated in regulation of the GAIT complex activity and probably multiple targets including ANXA5, EZR, MSN and VIM. Involved in inflammation, enhances the synthesis of pro-inflammatory mediators such as IL6 and IL8. The polypeptide is Nitric oxide synthase, inducible (NOS2) (Bos taurus (Bovine)).